A 347-amino-acid chain; its full sequence is Fructose-1,6-bisphosphatase class 1 (347 aa).

Mg(2+) is bound by residues glutamate 106, aspartate 128, isoleucine 130, and aspartate 131. Substrate is bound by residues 131–134 (DGSS), asparagine 223, tyrosine 251, and lysine 281. Glutamate 287 contacts Mg(2+).

This sequence belongs to the FBPase class 1 family. Homotetramer. Mg(2+) is required as a cofactor.

It localises to the cytoplasm. It catalyses the reaction beta-D-fructose 1,6-bisphosphate + H2O = beta-D-fructose 6-phosphate + phosphate. The protein operates within carbohydrate biosynthesis; Calvin cycle. The polypeptide is Fructose-1,6-bisphosphatase class 1 (Synechocystis sp. (strain ATCC 27184 / PCC 6803 / Kazusa)).